A 727-amino-acid chain; its full sequence is Prolyl endopeptidase-like (727 aa).

Catalysis depends on charge relay system residues Ser-559, Asp-645, and His-690.

The protein belongs to the peptidase S9A family. Homodimer. Interacts with the AP-1 complex.

The protein resides in the cytoplasm. The protein localises to the cytosol. It localises to the golgi apparatus. It is found in the trans-Golgi network. Its subcellular location is the cytoskeleton. The protein resides in the nucleus. Its function is as follows. Serine peptidase whose precise substrate specificity remains unclear. Does not cleave peptides after a arginine or lysine residue. Regulates trans-Golgi network morphology and sorting by regulating the membrane binding of the AP-1 complex. May play a role in the regulation of synaptic vesicle exocytosis. This chain is Prolyl endopeptidase-like (PREPL), found in Macaca fascicularis (Crab-eating macaque).